The following is a 244-amino-acid chain: 1-(5-phosphoribosyl)-5-[(5-phosphoribosylamino)methylideneamino] imidazole-4-carboxamide isomerase (244 aa).

The active-site Proton acceptor is Asp8. The Proton donor role is filled by Asp129.

The protein belongs to the HisA/HisF family.

The protein localises to the cytoplasm. It catalyses the reaction 1-(5-phospho-beta-D-ribosyl)-5-[(5-phospho-beta-D-ribosylamino)methylideneamino]imidazole-4-carboxamide = 5-[(5-phospho-1-deoxy-D-ribulos-1-ylimino)methylamino]-1-(5-phospho-beta-D-ribosyl)imidazole-4-carboxamide. Its pathway is amino-acid biosynthesis; L-histidine biosynthesis; L-histidine from 5-phospho-alpha-D-ribose 1-diphosphate: step 4/9. The sequence is that of 1-(5-phosphoribosyl)-5-[(5-phosphoribosylamino)methylideneamino] imidazole-4-carboxamide isomerase from Chelativorans sp. (strain BNC1).